Here is a 182-residue protein sequence, read N- to C-terminus: ATP-dependent protease subunit HslV (182 aa).

Residue threonine 12 is part of the active site. Positions 167, 170, and 173 each coordinate Na(+).

It belongs to the peptidase T1B family. HslV subfamily. A double ring-shaped homohexamer of HslV is capped on each side by a ring-shaped HslU homohexamer. The assembly of the HslU/HslV complex is dependent on binding of ATP.

It localises to the cytoplasm. It carries out the reaction ATP-dependent cleavage of peptide bonds with broad specificity.. With respect to regulation, allosterically activated by HslU binding. Its function is as follows. Protease subunit of a proteasome-like degradation complex believed to be a general protein degrading machinery. The chain is ATP-dependent protease subunit HslV from Chlorobium limicola (strain DSM 245 / NBRC 103803 / 6330).